A 391-amino-acid chain; its full sequence is MSVLPGAAAIAGIGATEFSKNSGRSELQLACEAVLAAIADAGLEPSDVDGLVTFTADTSSEIHVARNTGIGELKFFSRVGYGGGAACGTVQQAAMAVATGIAEVVVCYRAFNERSGVRYGLGQAGRQMDQGADSAAYAWLLPFGLNTPAQWVAMFARRYMHEYGATSEDFGRVAVVDRKHAATNPKAWFYQRPITLEDHQNSRWIVEPLHLLDCCQESDGGQALVVVSTERARDLPHPPALIWGAAQGSGYDQHMMTSYYRSEITGIPEMGLVGQQLYAQSGLNPSDIGAAILYDHFTPLVLPQLEELGFCARGEAKDFIADGNLEIGGRLPCNTHGGQLGEAYIHGMNGIAEAVRLVRGTSVNQPGDVTNVLVTAGTGVPTSGLILGADR.

The Proton acceptor role is filled by Tyr294. The active-site Proton donor is the Tyr344.

The protein belongs to the thiolase-like superfamily. In terms of assembly, homodimer. Interacts with the ChsH1/ChsH2 hydratase via the DUF35 C-terminal region of ChsH2 (ChsH2-DUF35).

The enzyme catalyses 17-hydroxy-3-oxochol-4-en-22-oyl-CoA = androst-4-ene-3,17-dione + propanoyl-CoA. Functionally, probably involved in bile acid degradation. In vitro, when associated with the ChsH1/ChsH2 hydratase, catalyzes the retroaldol cleavage of 17-hydroxy-3-oxo-4-pregnene-20-carboxyl-CoA (17-HOPC-CoA), forming androst-4-ene-3,17-dione and propionyl-CoA. The in vivo substrate is probably a closely analogous bile acid degradation metabolite. In Thermomonospora curvata (strain ATCC 19995 / DSM 43183 / JCM 3096 / KCTC 9072 / NBRC 15933 / NCIMB 10081 / Henssen B9), this protein is Steroid side-chain-cleaving aldolase.